We begin with the raw amino-acid sequence, 563 residues long: Putative cysteine ligase BshC (563 aa).

Positions 474-506 (LEQSLMGTSKQAEKALDTLRQKTQRANRRKHDE) form a coiled coil.

The protein belongs to the BshC family.

The sequence is that of Putative cysteine ligase BshC from Prosthecochloris aestuarii (strain DSM 271 / SK 413).